The following is a 362-amino-acid chain: S-adenosylmethionine decarboxylase proenzyme (362 aa).

Residues Glu13 and Glu16 contribute to the active site. The Schiff-base intermediate with substrate; via pyruvic acid role is filled by Ser73. Pyruvic acid (Ser); by autocatalysis is present on Ser73. Residue Cys87 is the Proton donor; for catalytic activity of the active site. Residues Ser236 and His249 each act as proton acceptor; for processing activity in the active site.

The protein belongs to the eukaryotic AdoMetDC family. It depends on pyruvate as a cofactor. In terms of processing, is synthesized initially as an inactive proenzyme. Formation of the active enzyme involves a self-maturation process in which the active site pyruvoyl group is generated from an internal serine residue via an autocatalytic post-translational modification. Two non-identical subunits are generated from the proenzyme in this reaction, and the pyruvate is formed at the N-terminus of the alpha chain, which is derived from the carboxyl end of the proenzyme. The post-translation cleavage follows an unusual pathway, termed non-hydrolytic serinolysis, in which the side chain hydroxyl group of the serine supplies its oxygen atom to form the C-terminus of the beta chain, while the remainder of the serine residue undergoes an oxidative deamination to produce ammonia and the pyruvoyl group blocking the N-terminus of the alpha chain.

The enzyme catalyses S-adenosyl-L-methionine + H(+) = S-adenosyl 3-(methylsulfanyl)propylamine + CO2. Its pathway is amine and polyamine biosynthesis; S-adenosylmethioninamine biosynthesis; S-adenosylmethioninamine from S-adenosyl-L-methionine: step 1/1. The polypeptide is S-adenosylmethionine decarboxylase proenzyme (SAMDC) (Datura stramonium (Jimsonweed)).